The following is a 65-amino-acid chain: Neurotoxin BmK AGAP-SYPU2 (65 aa).

One can recognise an LCN-type CS-alpha/beta domain in the interval 2 to 64; that stretch reads KDGYIVDDKN…VPIRVPGRCN (63 aa). 4 disulfides stabilise this stretch: C12/C63, C16/C36, C22/C46, and C26/C48.

Expressed by the venom gland.

It localises to the secreted. Alpha toxins bind voltage-independently at site-3 of sodium channels and inhibit the inactivation of the activated channels, thereby blocking neuronal transmission. In vivo, shows analgesic activity (ED(50) is 1.42 mg/kg) and antitumor activity against Ehrlich ascites tumor and S-180 fibrosarcoma models. The sequence is that of Neurotoxin BmK AGAP-SYPU2 from Olivierus martensii (Manchurian scorpion).